We begin with the raw amino-acid sequence, 355 residues long: Protein RecA (355 aa).

Residue 67–74 (GPESSGKT) coordinates ATP.

It belongs to the RecA family.

The protein localises to the cytoplasm. Functionally, can catalyze the hydrolysis of ATP in the presence of single-stranded DNA, the ATP-dependent uptake of single-stranded DNA by duplex DNA, and the ATP-dependent hybridization of homologous single-stranded DNAs. It interacts with LexA causing its activation and leading to its autocatalytic cleavage. This chain is Protein RecA, found in Shewanella amazonensis (strain ATCC BAA-1098 / SB2B).